A 418-amino-acid polypeptide reads, in one-letter code: Exodeoxyribonuclease 7 large subunit (418 aa).

The protein belongs to the XseA family. In terms of assembly, heterooligomer composed of large and small subunits.

The protein resides in the cytoplasm. The catalysed reaction is Exonucleolytic cleavage in either 5'- to 3'- or 3'- to 5'-direction to yield nucleoside 5'-phosphates.. Functionally, bidirectionally degrades single-stranded DNA into large acid-insoluble oligonucleotides, which are then degraded further into small acid-soluble oligonucleotides. This chain is Exodeoxyribonuclease 7 large subunit, found in Acaryochloris marina (strain MBIC 11017).